The following is a 138-amino-acid chain: MAGLPEKEKLLRNFNRCANWEEKYLYIIELGQRLAPLDDAERTPAHRIQGCQSQVWIVMNPGENGVIEMRGDSDAAIVKGLIAVVFALYQQMTAQDIVNFDVRPWFEEMSLTQHLTPSRSQGLEAMIRAIRAKAADLS.

The Cysteine persulfide intermediate role is filled by cysteine 51.

The protein belongs to the SufE family. In terms of assembly, homodimer. Interacts with SufS.

The protein resides in the cytoplasm. It functions in the pathway cofactor biosynthesis; iron-sulfur cluster biosynthesis. In terms of biological role, participates in cysteine desulfuration mediated by SufS. Cysteine desulfuration mobilizes sulfur from L-cysteine to yield L-alanine and constitutes an essential step in sulfur metabolism for biosynthesis of a variety of sulfur-containing biomolecules. Functions as a sulfur acceptor for SufS, by mediating the direct transfer of the sulfur atom from the S-sulfanylcysteine of SufS, an intermediate product of cysteine desulfuration process. This chain is Cysteine desulfuration protein SufE, found in Cronobacter sakazakii (strain ATCC BAA-894) (Enterobacter sakazakii).